Reading from the N-terminus, the 488-residue chain is Glutamyl-tRNA(Gln) amidotransferase subunit A (488 aa).

Residues Lys-77 and Ser-152 each act as charge relay system in the active site. Residue Ser-176 is the Acyl-ester intermediate of the active site.

This sequence belongs to the amidase family. GatA subfamily. In terms of assembly, heterotrimer of A, B and C subunits.

It catalyses the reaction L-glutamyl-tRNA(Gln) + L-glutamine + ATP + H2O = L-glutaminyl-tRNA(Gln) + L-glutamate + ADP + phosphate + H(+). Functionally, allows the formation of correctly charged Gln-tRNA(Gln) through the transamidation of misacylated Glu-tRNA(Gln) in organisms which lack glutaminyl-tRNA synthetase. The reaction takes place in the presence of glutamine and ATP through an activated gamma-phospho-Glu-tRNA(Gln). In Streptococcus equi subsp. zooepidemicus (strain H70), this protein is Glutamyl-tRNA(Gln) amidotransferase subunit A.